Consider the following 146-residue polypeptide: MORN repeat-containing protein 4 (146 aa).

MORN repeat units follow at residues 16–38 (YRGE…DGGT), 39–61 (YLGH…DGSR), 62–84 (YEGE…DNMT), and 85–107 (FEGE…DGSH).

Interacts with MYO3A. Retina.

It is found in the cytoplasm. The protein resides in the cell projection. The protein localises to the filopodium tip. Its subcellular location is the stereocilium. Its function is as follows. Plays a role in promoting axonal degeneration following neuronal injury by toxic insult or trauma. The protein is MORN repeat-containing protein 4 (MORN4) of Bos taurus (Bovine).